Consider the following 67-residue polypeptide: Large ribosomal subunit protein bL31 (67 aa).

The protein belongs to the bacterial ribosomal protein bL31 family. Type A subfamily. Part of the 50S ribosomal subunit.

Its function is as follows. Binds the 23S rRNA. The sequence is that of Large ribosomal subunit protein bL31 from Helicobacter acinonychis (strain Sheeba).